A 248-amino-acid chain; its full sequence is Pyridoxine 5'-phosphate synthase (248 aa).

Residue asparagine 12 coordinates 3-amino-2-oxopropyl phosphate. Residue 14–15 (DH) coordinates 1-deoxy-D-xylulose 5-phosphate. Arginine 23 provides a ligand contact to 3-amino-2-oxopropyl phosphate. Catalysis depends on histidine 48, which acts as the Proton acceptor. 2 residues coordinate 1-deoxy-D-xylulose 5-phosphate: arginine 50 and histidine 55. Residue glutamate 75 is the Proton acceptor of the active site. Threonine 105 serves as a coordination point for 1-deoxy-D-xylulose 5-phosphate. The active-site Proton donor is histidine 196. 3-amino-2-oxopropyl phosphate is bound by residues glycine 197 and 218-219 (GH).

It belongs to the PNP synthase family. In terms of assembly, homooctamer; tetramer of dimers.

Its subcellular location is the cytoplasm. The catalysed reaction is 3-amino-2-oxopropyl phosphate + 1-deoxy-D-xylulose 5-phosphate = pyridoxine 5'-phosphate + phosphate + 2 H2O + H(+). It participates in cofactor biosynthesis; pyridoxine 5'-phosphate biosynthesis; pyridoxine 5'-phosphate from D-erythrose 4-phosphate: step 5/5. In terms of biological role, catalyzes the complicated ring closure reaction between the two acyclic compounds 1-deoxy-D-xylulose-5-phosphate (DXP) and 3-amino-2-oxopropyl phosphate (1-amino-acetone-3-phosphate or AAP) to form pyridoxine 5'-phosphate (PNP) and inorganic phosphate. The chain is Pyridoxine 5'-phosphate synthase from Pseudomonas aeruginosa (strain LESB58).